An 832-amino-acid polypeptide reads, in one-letter code: Regulator of drug sensitivity 1 (832 aa).

The segment at residues 15–42 (CLQCKKIKRKCDKLRPACSRCQQNSLQC) is a DNA-binding region (zn(2)-C6 fungal-type).

Its subcellular location is the nucleus. Functionally, zinc cluster transcription factor involved in resistance to cycloheximide. In Saccharomyces cerevisiae (strain ATCC 204508 / S288c) (Baker's yeast), this protein is Regulator of drug sensitivity 1 (RDS1).